The chain runs to 282 residues: Formamidopyrimidine-DNA glycosylase (282 aa).

Proline 2 (schiff-base intermediate with DNA) is an active-site residue. Glutamate 3 (proton donor) is an active-site residue. The active-site Proton donor; for beta-elimination activity is lysine 61. Histidine 93, arginine 112, and lysine 158 together coordinate DNA. An FPG-type zinc finger spans residues aspartate 244–proline 278. Arginine 268 (proton donor; for delta-elimination activity) is an active-site residue.

Belongs to the FPG family. Monomer. Requires Zn(2+) as cofactor.

The enzyme catalyses Hydrolysis of DNA containing ring-opened 7-methylguanine residues, releasing 2,6-diamino-4-hydroxy-5-(N-methyl)formamidopyrimidine.. It carries out the reaction 2'-deoxyribonucleotide-(2'-deoxyribose 5'-phosphate)-2'-deoxyribonucleotide-DNA = a 3'-end 2'-deoxyribonucleotide-(2,3-dehydro-2,3-deoxyribose 5'-phosphate)-DNA + a 5'-end 5'-phospho-2'-deoxyribonucleoside-DNA + H(+). Involved in base excision repair of DNA damaged by oxidation or by mutagenic agents. Acts as a DNA glycosylase that recognizes and removes damaged bases. Has a preference for oxidized purines, such as 7,8-dihydro-8-oxoguanine (8-oxoG). Has AP (apurinic/apyrimidinic) lyase activity and introduces nicks in the DNA strand. Cleaves the DNA backbone by beta-delta elimination to generate a single-strand break at the site of the removed base with both 3'- and 5'-phosphates. The sequence is that of Formamidopyrimidine-DNA glycosylase from Mycolicibacterium gilvum (strain PYR-GCK) (Mycobacterium gilvum (strain PYR-GCK)).